We begin with the raw amino-acid sequence, 457 residues long: Peptidyl-prolyl cis-trans isomerase FKBP5 (457 aa).

Met-1 bears the N-acetylmethionine mark. The segment covering 1-11 has biased composition (basic and acidic residues); sequence MTTDEGAKNNE. The tract at residues 1–24 is disordered; that stretch reads MTTDEGAKNNEESPTATVAEQGED. Phosphoserine is present on Ser-13. Lys-28 is subject to N6-acetyllysine. A PPIase FKBP-type 1 domain is found at 42–130; the sequence is NGEETPMIGD…KIPSNATLFF (89 aa). Lys-155 is modified (N6-acetyllysine). The PPIase FKBP-type 2 domain occupies 157–243; it reads EGYSNPNEGA…GIEPNAELIY (87 aa). TPR repeat units follow at residues 268 to 301, 317 to 350, and 351 to 384; these read AAIV…LEME, LAAF…DSAN, and EKGL…NPQN. Residues 420–457 form a disordered region; it reads DAKEEANKAMGKKTSEGVTNEKGTDSQAMEEEKPEGHV. Ser-445 bears the Phosphoserine mark.

As to quaternary structure, part of a heteromultimeric cytoplasmic complex with HSP90AA1, HSPA1A/HSPA1B and steroid receptors. Upon ligand binding dissociates from the complex and FKBP4 takes its place. Interacts with functionally mature heterooligomeric progesterone receptor complexes along with HSP90 and TEBP. Interacts with NR3C1. Interacts with Akt/AKT1 and PHLPP1; enhancing dephosphorylation and subsequent activation of Akt/AKT1. Interacts with IFI44L; this interaction modulates the kinase activity of IKBKB and IKBKE. Interacts with IKBKB and IKBKE. Acetylation impairs ability to promote interaction between Akt/AKT1 and PHLPP1. Deacetylation by SIRT7 promotes interaction between Akt/AKT1 and PHLPP1, leading to suppress Akt/AKT1 activation. In terms of processing, ubiquitinated, leading to degradation in a proteasome-dependent manner. Deubiquitinated by USP49, leading to stabilization. As to expression, widely expressed, enriched in testis compared to other tissues.

Its subcellular location is the cytoplasm. It localises to the nucleus. It carries out the reaction [protein]-peptidylproline (omega=180) = [protein]-peptidylproline (omega=0). Its activity is regulated as follows. Inhibited by both FK506 and rapamycin. Its function is as follows. Immunophilin protein with PPIase and co-chaperone activities. Component of unligated steroid receptors heterocomplexes through interaction with heat-shock protein 90 (HSP90). Plays a role in the intracellular trafficking of heterooligomeric forms of steroid hormone receptors maintaining the complex into the cytoplasm when unliganded. Acts as a regulator of Akt/AKT1 activity by promoting the interaction between Akt/AKT1 and PHLPP1, thereby enhancing dephosphorylation and subsequent activation of Akt/AKT1. Interacts with IKBKE and IKBKB which facilitates IKK complex assembly leading to increased IKBKE and IKBKB kinase activity, NF-kappa-B activation, and IFN production. The polypeptide is Peptidyl-prolyl cis-trans isomerase FKBP5 (FKBP5) (Homo sapiens (Human)).